The chain runs to 33 residues: Photosystem II reaction center protein Psb30 (33 aa).

The helical transmembrane segment at 5–25 (VIAQLIALALIVGSGPLVIAL) threads the bilayer.

This sequence belongs to the Psb30/Ycf12 family. In terms of assembly, PSII is composed of 1 copy each of membrane proteins PsbA, PsbB, PsbC, PsbD, PsbE, PsbF, PsbH, PsbI, PsbJ, PsbK, PsbL, PsbM, PsbT, PsbX, PsbY, PsbZ, Psb30/Ycf12, peripheral proteins of the oxygen-evolving complex and a large number of cofactors. It forms dimeric complexes.

It localises to the plastid. It is found in the chloroplast thylakoid membrane. Functionally, a core subunit of photosystem II (PSII), probably helps stabilize the reaction center. This is Photosystem II reaction center protein Psb30 from Physcomitrium patens (Spreading-leaved earth moss).